The sequence spans 324 residues: Viral cathepsin (324 aa).

Residues 1–16 form the signal peptide; that stretch reads MNKIVLYLLVYGATLG. The propeptide at 17–113 is activation peptide; it reads AAYDLLKAPS…VVLDRPPDKG (97 aa). 3 disulfides stabilise this stretch: Cys-134-Cys-175, Cys-168-Cys-208, and Cys-263-Cys-311. The active site involves Cys-137. Asn-159 is a glycosylation site (N-linked (GlcNAc...) asparagine; by host). Residues His-270 and Asn-290 contribute to the active site.

Belongs to the peptidase C1 family. Post-translationally, synthesized as an inactive proenzyme and activated by proteolytic removal of the inhibitory propeptide.

It carries out the reaction Endopeptidase of broad specificity, hydrolyzing substrates of both cathepsin L and cathepsin B.. In terms of biological role, cysteine protease that plays an essential role in host liquefaction to facilitate horizontal transmission of the virus. May participate in the degradation of foreign protein expressed by the baculovirus system. This is Viral cathepsin (VCATH) from Antheraea pernyi nuclear polyhedrosis virus (ApNPV).